We begin with the raw amino-acid sequence, 179 residues long: Large ribosomal subunit protein uL6 (179 aa).

The protein belongs to the universal ribosomal protein uL6 family. Part of the 50S ribosomal subunit.

Functionally, this protein binds to the 23S rRNA, and is important in its secondary structure. It is located near the subunit interface in the base of the L7/L12 stalk, and near the tRNA binding site of the peptidyltransferase center. In Chloroherpeton thalassium (strain ATCC 35110 / GB-78), this protein is Large ribosomal subunit protein uL6.